Reading from the N-terminus, the 433-residue chain is Glutamate-1-semialdehyde 2,1-aminomutase (433 aa).

At K271 the chain carries N6-(pyridoxal phosphate)lysine.

Belongs to the class-III pyridoxal-phosphate-dependent aminotransferase family. HemL subfamily. In terms of assembly, homodimer. Requires pyridoxal 5'-phosphate as cofactor.

It is found in the cytoplasm. The enzyme catalyses (S)-4-amino-5-oxopentanoate = 5-aminolevulinate. It functions in the pathway porphyrin-containing compound metabolism; protoporphyrin-IX biosynthesis; 5-aminolevulinate from L-glutamyl-tRNA(Glu): step 2/2. Its pathway is porphyrin-containing compound metabolism; chlorophyll biosynthesis. The polypeptide is Glutamate-1-semialdehyde 2,1-aminomutase (Prochlorococcus marinus subsp. pastoris (strain CCMP1986 / NIES-2087 / MED4)).